Consider the following 468-residue polypeptide: 3-isopropylmalate dehydratase large subunit (468 aa).

[4Fe-4S] cluster-binding residues include C349, C409, and C412.

It belongs to the aconitase/IPM isomerase family. LeuC type 1 subfamily. Heterodimer of LeuC and LeuD. The cofactor is [4Fe-4S] cluster.

It catalyses the reaction (2R,3S)-3-isopropylmalate = (2S)-2-isopropylmalate. It functions in the pathway amino-acid biosynthesis; L-leucine biosynthesis; L-leucine from 3-methyl-2-oxobutanoate: step 2/4. In terms of biological role, catalyzes the isomerization between 2-isopropylmalate and 3-isopropylmalate, via the formation of 2-isopropylmaleate. The polypeptide is 3-isopropylmalate dehydratase large subunit (Roseobacter denitrificans (strain ATCC 33942 / OCh 114) (Erythrobacter sp. (strain OCh 114))).